Consider the following 46-residue polypeptide: Peroxidase 1 (46 aa).

It belongs to the peroxidase family. Classical plant (class III) peroxidase subfamily. The cofactor is heme b. Requires Ca(2+) as cofactor.

It localises to the secreted. The enzyme catalyses 2 a phenolic donor + H2O2 = 2 a phenolic radical donor + 2 H2O. Removal of H(2)O(2), oxidation of toxic reductants, biosynthesis and degradation of lignin, suberization, auxin catabolism, response to environmental stresses such as wounding, pathogen attack and oxidative stress. These functions might be dependent on each isozyme/isoform in each plant tissue. The chain is Peroxidase 1 from Catharanthus roseus (Madagascar periwinkle).